Here is a 121-residue protein sequence, read N- to C-terminus: Fluoride-specific ion channel FluC 3 (121 aa).

4 consecutive transmembrane segments (helical) span residues 3–23 (VFLP…RYLL), 40–60 (FTIN…ALGG), 69–89 (VLAT…NEMV), and 101–121 (AAYL…GFLV). Residues G76 and S79 each contribute to the Na(+) site.

It belongs to the fluoride channel Fluc/FEX (TC 1.A.43) family.

The protein localises to the cell membrane. It carries out the reaction fluoride(in) = fluoride(out). Na(+) is not transported, but it plays an essential structural role and its presence is essential for fluoride channel function. Functionally, fluoride-specific ion channel. Important for reducing fluoride concentration in the cell, thus reducing its toxicity. The protein is Fluoride-specific ion channel FluC 3 of Bifidobacterium longum (strain NCC 2705).